The sequence spans 286 residues: ATP phosphoribosyltransferase (286 aa).

Belongs to the ATP phosphoribosyltransferase family. Long subfamily. Mg(2+) serves as cofactor.

It is found in the cytoplasm. The enzyme catalyses 1-(5-phospho-beta-D-ribosyl)-ATP + diphosphate = 5-phospho-alpha-D-ribose 1-diphosphate + ATP. It participates in amino-acid biosynthesis; L-histidine biosynthesis; L-histidine from 5-phospho-alpha-D-ribose 1-diphosphate: step 1/9. Its activity is regulated as follows. Feedback inhibited by histidine. Its function is as follows. Catalyzes the condensation of ATP and 5-phosphoribose 1-diphosphate to form N'-(5'-phosphoribosyl)-ATP (PR-ATP). Has a crucial role in the pathway because the rate of histidine biosynthesis seems to be controlled primarily by regulation of HisG enzymatic activity. This is ATP phosphoribosyltransferase from Cytophaga hutchinsonii (strain ATCC 33406 / DSM 1761 / CIP 103989 / NBRC 15051 / NCIMB 9469 / D465).